Reading from the N-terminus, the 101-residue chain is Small ribosomal subunit protein uS14 (101 aa).

It belongs to the universal ribosomal protein uS14 family. Part of the 30S ribosomal subunit. Contacts proteins S3 and S10.

In terms of biological role, binds 16S rRNA, required for the assembly of 30S particles and may also be responsible for determining the conformation of the 16S rRNA at the A site. This is Small ribosomal subunit protein uS14 from Shewanella halifaxensis (strain HAW-EB4).